The primary structure comprises 344 residues: Photosystem II protein D1 (344 aa).

Position 2 is an N-acetylthreonine (Thr2). Position 2 is a phosphothreonine (Thr2). 3 consecutive transmembrane segments (helical) span residues 29–46, 118–133, and 142–156; these read YIGWFGVLMFPLLLTATS, HFLLGVACYMGREWEL, and WIAVAYSAPVAAATA. His118 lines the chlorophyll a pocket. Residue Tyr126 participates in pheophytin a binding. Residues Asp170 and Glu189 each contribute to the [CaMn4O5] cluster site. Residues 197–218 form a helical membrane-spanning segment; it reads FHMLGVAGVFGGSLFSAMHGSL. His198 is a binding site for chlorophyll a. A quinone-binding positions include His215 and 264 to 265; that span reads SF. Residue His215 participates in Fe cation binding. His272 lines the Fe cation pocket. Residues 274 to 288 form a helical membrane-spanning segment; sequence FLAAWPVVCIWFTAL. Positions 332, 333, 342, and 344 each coordinate [CaMn4O5] cluster.

This sequence belongs to the reaction center PufL/M/PsbA/D family. In terms of assembly, PSII is composed of 1 copy each of membrane proteins PsbA, PsbB, PsbC, PsbD, PsbE, PsbF, PsbH, PsbI, PsbJ, PsbK, PsbL, PsbM, PsbT, PsbX, PsbY, PsbZ, Psb30/Ycf12, at least 3 peripheral proteins of the oxygen-evolving complex and a large number of cofactors. It forms dimeric complexes. It depends on The D1/D2 heterodimer binds P680, chlorophylls that are the primary electron donor of PSII, and subsequent electron acceptors. It shares a non-heme iron and each subunit binds pheophytin, quinone, additional chlorophylls, carotenoids and lipids. D1 provides most of the ligands for the Mn4-Ca-O5 cluster of the oxygen-evolving complex (OEC). There is also a Cl(-1) ion associated with D1 and D2, which is required for oxygen evolution. The PSII complex binds additional chlorophylls, carotenoids and specific lipids. as a cofactor. Post-translationally, tyr-161 forms a radical intermediate that is referred to as redox-active TyrZ, YZ or Y-Z.

It localises to the plastid. Its subcellular location is the chloroplast thylakoid membrane. The enzyme catalyses 2 a plastoquinone + 4 hnu + 2 H2O = 2 a plastoquinol + O2. Its function is as follows. Photosystem II (PSII) is a light-driven water:plastoquinone oxidoreductase that uses light energy to abstract electrons from H(2)O, generating O(2) and a proton gradient subsequently used for ATP formation. It consists of a core antenna complex that captures photons, and an electron transfer chain that converts photonic excitation into a charge separation. The D1/D2 (PsbA/PsbD) reaction center heterodimer binds P680, the primary electron donor of PSII as well as several subsequent electron acceptors. This chain is Photosystem II protein D1, found in Staurastrum punctulatum (Green alga).